The sequence spans 160 residues: Cytochrome b6-f complex subunit 4 (160 aa).

Residues 1–35 (MATLKKPDLSDPKLRAKLAKGMGHNYYGEPAWPND) lie on the Cytoplasmic side of the membrane. The helical transmembrane segment at 36–56 (LLYVFPVVIMGTFACIVALSV) threads the bilayer. Residues 57–94 (LDPAMVGEPADPFATPLEILPEWYLYPVFQILRSVPNK) are Lumenal, thylakoid-facing. Residues 95–115 (LLGVLLMASVPLGLILVPFIE) form a helical membrane-spanning segment. Over 116–130 (NVNKFQNPFRRPVAT) the chain is Cytoplasmic. A helical membrane pass occupies residues 131–151 (TIFLFGTLVTIWLGIGATFPL). Topologically, residues 152–160 (DKTLTLGLF) are lumenal, thylakoid.

It belongs to the cytochrome b family. PetD subfamily. As to quaternary structure, the 4 large subunits of the cytochrome b6-f complex are cytochrome b6, subunit IV (17 kDa polypeptide, PetD), cytochrome f and the Rieske protein, while the 4 small subunits are PetG, PetL, PetM and PetN. The complex functions as a dimer.

It localises to the cellular thylakoid membrane. In terms of biological role, component of the cytochrome b6-f complex, which mediates electron transfer between photosystem II (PSII) and photosystem I (PSI), cyclic electron flow around PSI, and state transitions. This is Cytochrome b6-f complex subunit 4 from Mastigocladus laminosus (Fischerella sp.).